A 310-amino-acid chain; its full sequence is Epoxyqueuosine reductase (310 aa).

The active-site Proton donor is the D133. The region spanning 179–208 (YDNPSDKDYCGTCTRCVDACPTDAILQDNL) is the 4Fe-4S ferredoxin-type domain. The [4Fe-4S] cluster site is built by C188, C191, C194, C198, C214, C241, C244, and C248.

This sequence belongs to the QueG family. As to quaternary structure, monomer. Requires cob(II)alamin as cofactor. It depends on [4Fe-4S] cluster as a cofactor.

The protein localises to the cytoplasm. It catalyses the reaction epoxyqueuosine(34) in tRNA + AH2 = queuosine(34) in tRNA + A + H2O. Its pathway is tRNA modification; tRNA-queuosine biosynthesis. Catalyzes the conversion of epoxyqueuosine (oQ) to queuosine (Q), which is a hypermodified base found in the wobble positions of tRNA(Asp), tRNA(Asn), tRNA(His) and tRNA(Tyr). The sequence is that of Epoxyqueuosine reductase from Cyclobacterium marinum (strain ATCC 25205 / DSM 745 / LMG 13164 / NCIMB 1802) (Flectobacillus marinus).